The chain runs to 399 residues: MGALTSPRKVVVLGSTGSIGLSTLSLFEESGAPVQILALTAGRNVERLIEQARRWKPSLAVIEDESRLDDLRAGLAGTGVEAAAGADAVRDAAAMGADWVMSAIVGAAGLAPTVAAARTGAVIALANKESLVCAGPALLAIAKAAGGSVIPVDSEHSAIFQVLQSECAHRVSRLILTASGGPFRTWDKAAMARATPEQAIAHPNWSMGAKISVDSATMMNKGLEMIEASYLFATPEDRVDVVIHPQSVIHSLVEYVDGSTLAQLGPPDMRAPIACAFAWPDRLPWPAPRLDLAAYGQLTFESPDVERFPAIGIAREALRLGGGAPAAMNAANEVAVAAFLDRRIGFLDIAGAVAGTLERMNSLGDLSVAESDAVETAMLIDGSARRIAAEVVAQKRQRA.

NADPH contacts are provided by Thr16, Gly17, Ser18, Ile19, Gly42, Arg43, Asn44, and Asn127. Lys128 lines the 1-deoxy-D-xylulose 5-phosphate pocket. Residue Glu129 participates in NADPH binding. A Mn(2+)-binding site is contributed by Asp153. Residues Ser154, Glu155, Ser179, and His202 each coordinate 1-deoxy-D-xylulose 5-phosphate. Glu155 provides a ligand contact to Mn(2+). Position 208 (Gly208) interacts with NADPH. 1-deoxy-D-xylulose 5-phosphate-binding residues include Ser215, Asn220, Lys221, and Glu224. Glu224 contributes to the Mn(2+) binding site.

This sequence belongs to the DXR family. Mg(2+) serves as cofactor. Requires Mn(2+) as cofactor.

The catalysed reaction is 2-C-methyl-D-erythritol 4-phosphate + NADP(+) = 1-deoxy-D-xylulose 5-phosphate + NADPH + H(+). The protein operates within isoprenoid biosynthesis; isopentenyl diphosphate biosynthesis via DXP pathway; isopentenyl diphosphate from 1-deoxy-D-xylulose 5-phosphate: step 1/6. Catalyzes the NADPH-dependent rearrangement and reduction of 1-deoxy-D-xylulose-5-phosphate (DXP) to 2-C-methyl-D-erythritol 4-phosphate (MEP). This is 1-deoxy-D-xylulose 5-phosphate reductoisomerase from Caulobacter vibrioides (strain NA1000 / CB15N) (Caulobacter crescentus).